Reading from the N-terminus, the 323-residue chain is ATP synthase gamma chain (323 aa).

This sequence belongs to the ATPase gamma chain family. As to quaternary structure, F-type ATPases have 2 components, CF(1) - the catalytic core - and CF(0) - the membrane proton channel. CF(1) has five subunits: alpha(3), beta(3), gamma(1), delta(1), epsilon(1). CF(0) has three main subunits: a, b and c.

The protein resides in the cell inner membrane. Produces ATP from ADP in the presence of a proton gradient across the membrane. The gamma chain is believed to be important in regulating ATPase activity and the flow of protons through the CF(0) complex. This Rickettsia rickettsii (strain Iowa) protein is ATP synthase gamma chain.